A 218-amino-acid polypeptide reads, in one-letter code: N-(5'-phosphoribosyl)anthranilate isomerase (218 aa).

Belongs to the TrpF family.

The catalysed reaction is N-(5-phospho-beta-D-ribosyl)anthranilate = 1-(2-carboxyphenylamino)-1-deoxy-D-ribulose 5-phosphate. The protein operates within amino-acid biosynthesis; L-tryptophan biosynthesis; L-tryptophan from chorismate: step 3/5. This is N-(5'-phosphoribosyl)anthranilate isomerase from Bacillus licheniformis (strain ATCC 14580 / DSM 13 / JCM 2505 / CCUG 7422 / NBRC 12200 / NCIMB 9375 / NCTC 10341 / NRRL NRS-1264 / Gibson 46).